Consider the following 696-residue polypeptide: DNA-directed RNA polymerase subunit beta' (696 aa).

Zn(2+) contacts are provided by cysteine 76, cysteine 78, cysteine 94, and cysteine 97. Mg(2+) contacts are provided by aspartate 496, aspartate 498, and aspartate 500.

It belongs to the RNA polymerase beta' chain family. RpoC1 subfamily. As to quaternary structure, in plastids the minimal PEP RNA polymerase catalytic core is composed of four subunits: alpha, beta, beta', and beta''. When a (nuclear-encoded) sigma factor is associated with the core the holoenzyme is formed, which can initiate transcription. Mg(2+) is required as a cofactor. Requires Zn(2+) as cofactor.

Its subcellular location is the plastid. The protein resides in the chloroplast. The enzyme catalyses RNA(n) + a ribonucleoside 5'-triphosphate = RNA(n+1) + diphosphate. In terms of biological role, DNA-dependent RNA polymerase catalyzes the transcription of DNA into RNA using the four ribonucleoside triphosphates as substrates. In Guizotia abyssinica (Niger), this protein is DNA-directed RNA polymerase subunit beta'.